A 230-amino-acid chain; its full sequence is Ribonuclease 3 (230 aa).

Positions 5–125 (YSRFYNILGY…VIGAIYLDSD (121 aa)) constitute an RNase III domain. Residue Glu40 coordinates Mg(2+). The active site involves Asp44. Residues Asp111 and Glu114 each coordinate Mg(2+). Glu114 is an active-site residue. The DRBM domain maps to 153 to 223 (DSKSKLQEIL…AEKMIEMLSQ (71 aa)).

Belongs to the ribonuclease III family. As to quaternary structure, homodimer. The cofactor is Mg(2+).

Its subcellular location is the cytoplasm. The catalysed reaction is Endonucleolytic cleavage to 5'-phosphomonoester.. Digests double-stranded RNA. Involved in the processing of primary rRNA transcript to yield the immediate precursors to the large and small rRNAs (23S and 16S). Processes some mRNAs, and tRNAs when they are encoded in the rRNA operon. Processes pre-crRNA and tracrRNA of type II CRISPR loci if present in the organism. In Francisella tularensis subsp. holarctica (strain LVS), this protein is Ribonuclease 3.